Reading from the N-terminus, the 276-residue chain is Large ribosomal subunit protein uL2 (276 aa).

Disordered stretches follow at residues 1 to 50 and 206 to 276; these read MPIK…GRVT and GKAG…SKKR. Residues 7 to 19 show a composition bias toward polar residues; the sequence is RPTTPTRRFQTVV. Residues 20-38 show a composition bias toward basic and acidic residues; the sequence is SREDITKQTPEKSLVESKK.

Belongs to the universal ribosomal protein uL2 family. Part of the 50S ribosomal subunit. Forms a bridge to the 30S subunit in the 70S ribosome.

In terms of biological role, one of the primary rRNA binding proteins. Required for association of the 30S and 50S subunits to form the 70S ribosome, for tRNA binding and peptide bond formation. It has been suggested to have peptidyltransferase activity; this is somewhat controversial. Makes several contacts with the 16S rRNA in the 70S ribosome. The chain is Large ribosomal subunit protein uL2 from Solibacter usitatus (strain Ellin6076).